The sequence spans 455 residues: UDP-N-acetylmuramate--L-alanine ligase (455 aa).

Residue G109–T115 participates in ATP binding.

Belongs to the MurCDEF family.

It is found in the cytoplasm. It catalyses the reaction UDP-N-acetyl-alpha-D-muramate + L-alanine + ATP = UDP-N-acetyl-alpha-D-muramoyl-L-alanine + ADP + phosphate + H(+). Its pathway is cell wall biogenesis; peptidoglycan biosynthesis. In terms of biological role, cell wall formation. The chain is UDP-N-acetylmuramate--L-alanine ligase from Caldicellulosiruptor saccharolyticus (strain ATCC 43494 / DSM 8903 / Tp8T 6331).